Consider the following 225-residue polypeptide: Uracil-DNA glycosylase (225 aa).

Residue aspartate 65 is the Proton acceptor of the active site.

Belongs to the uracil-DNA glycosylase (UDG) superfamily. UNG family.

It is found in the cytoplasm. The enzyme catalyses Hydrolyzes single-stranded DNA or mismatched double-stranded DNA and polynucleotides, releasing free uracil.. Functionally, excises uracil residues from the DNA which can arise as a result of misincorporation of dUMP residues by DNA polymerase or due to deamination of cytosine. The protein is Uracil-DNA glycosylase of Clostridium beijerinckii (strain ATCC 51743 / NCIMB 8052) (Clostridium acetobutylicum).